The sequence spans 870 residues: Phenylalanine--tRNA ligase beta subunit (870 aa).

The tRNA-binding domain occupies Ala39–Thr148. One can recognise a B5 domain in the interval Pro427 to Ser551. The region spanning Leu450 to Ile498 is the RPE1 insert domain. The Mg(2+) site is built by Asp529, Asp535, Glu538, and Glu539. The 94-residue stretch at Ser776–Arg869 folds into the FDX-ACB domain.

The protein belongs to the phenylalanyl-tRNA synthetase beta subunit family. Type 1 subfamily. As to quaternary structure, tetramer of two alpha and two beta subunits. It depends on Mg(2+) as a cofactor.

The protein resides in the cytoplasm. The enzyme catalyses tRNA(Phe) + L-phenylalanine + ATP = L-phenylalanyl-tRNA(Phe) + AMP + diphosphate + H(+). This is Phenylalanine--tRNA ligase beta subunit (pheT) from Rickettsia bellii (strain RML369-C).